The following is a 95-amino-acid chain: Large ribosomal subunit protein uL23 (95 aa).

It belongs to the universal ribosomal protein uL23 family. Part of the 50S ribosomal subunit. Contacts protein L29, and trigger factor when it is bound to the ribosome.

In terms of biological role, one of the early assembly proteins it binds 23S rRNA. One of the proteins that surrounds the polypeptide exit tunnel on the outside of the ribosome. Forms the main docking site for trigger factor binding to the ribosome. The protein is Large ribosomal subunit protein uL23 of Desulfotalea psychrophila (strain LSv54 / DSM 12343).